The primary structure comprises 173 residues: Pyrimidine operon regulatory protein (173 aa).

Residues 40 to 41, 97 to 105, and R130 contribute to the substrate site; these read TR and DDVLYTGRT. The PRPP-binding motif lies at 93–105; that stretch reads VILVDDVLYTGRT.

It belongs to the purine/pyrimidine phosphoribosyltransferase family. PyrR subfamily.

Its function is as follows. Regulates transcriptional attenuation of the pyrimidine nucleotide (pyr) operon in response to exogenous pyrimidines, probably by binding to specific sites on pyr mRNA. This probably disrupts an antiterminator hairpin in the RNA and favors formation of a downstream transcription terminator, leading to a reduced expression of downstream genes. This is Pyrimidine operon regulatory protein from Lactococcus lactis subsp. lactis (strain IL1403) (Streptococcus lactis).